Here is a 350-residue protein sequence, read N- to C-terminus: Methylthioribose-1-phosphate isomerase (350 aa).

Aspartate 241 functions as the Proton donor in the catalytic mechanism.

It belongs to the eIF-2B alpha/beta/delta subunits family. MtnA subfamily.

It is found in the cytoplasm. Its subcellular location is the nucleus. The enzyme catalyses 5-(methylsulfanyl)-alpha-D-ribose 1-phosphate = 5-(methylsulfanyl)-D-ribulose 1-phosphate. It participates in amino-acid biosynthesis; L-methionine biosynthesis via salvage pathway; L-methionine from S-methyl-5-thio-alpha-D-ribose 1-phosphate: step 1/6. Catalyzes the interconversion of methylthioribose-1-phosphate (MTR-1-P) into methylthioribulose-1-phosphate (MTRu-1-P). The sequence is that of Methylthioribose-1-phosphate isomerase from Nematostella vectensis (Starlet sea anemone).